The following is a 600-amino-acid chain: Kelch-like protein 24 (600 aa).

Residues 66–133 (TDVIICVEGK…VYTGKVKITT (68 aa)) form the BTB domain. The 103-residue stretch at 168–270 (CLGIQRFADT…HPNYFVQTVE (103 aa)) folds into the BACK domain. 6 Kelch repeats span residues 314-363 (VIVV…ALRN), 365-407 (ILVS…VLLG), 408-454 (KVYV…SCVG), 456-502 (LFVI…SLNN), 504-544 (IYVA…VCNG), and 546-592 (IYIL…TIHR).

In terms of assembly, forms homodimers. Interacts with GRIK2. Component of the BCR(KLHL24) E3 ubiquitin ligase complex, composed of CUL3, RBX1 and KLHL24. Interacts with CUL3. Interacts with KRT14. Autoubiquitinated. Autoubiquitination leads to proteasomal degradation and is necessary to control KLHL24 levels. Expressed in the skin. Found in keratinocytes, dermal fibroblasts, and melanocytes. Basal-layer keratinocytes have lower KLHL24 expression than suprabasal keratinocytes. Expressed in the brain, spinal cord, liver, testis, heart and at higher levels in the skeletal muscle.

It localises to the perikaryon. The protein localises to the cell projection. Its subcellular location is the axon. The protein resides in the cytoplasm. It is found in the cell junction. It localises to the desmosome. The protein localises to the adherens junction. Functionally, necessary to maintain the balance between intermediate filament stability and degradation, a process that is essential for skin integrity. As part of the BCR(KLHL24) E3 ubiquitin ligase complex, mediates ubiquitination of KRT14 and controls its levels during keratinocytes differentiation. Specifically reduces kainate receptor-mediated currents in hippocampal neurons, most probably by modulating channel properties. Has a crucial role in cardiac development and function. This chain is Kelch-like protein 24 (KLHL24), found in Homo sapiens (Human).